The sequence spans 254 residues: Alcohol dehydrogenase (254 aa).

Residue Met-1 is modified to N-acetylmethionine. Position 10-33 (Phe-10–Phe-33) interacts with NAD(+). Substrate is bound at residue Ser-138. Tyr-151 functions as the Proton acceptor in the catalytic mechanism.

This sequence belongs to the short-chain dehydrogenases/reductases (SDR) family. Homodimer.

The enzyme catalyses a primary alcohol + NAD(+) = an aldehyde + NADH + H(+). It catalyses the reaction a secondary alcohol + NAD(+) = a ketone + NADH + H(+). The sequence is that of Alcohol dehydrogenase (Adh) from Drosophila lebanonensis (Fruit fly).